The primary structure comprises 232 residues: Ubiquinone biosynthesis O-methyltransferase (232 aa).

Positions 36, 55, 76, and 120 each coordinate S-adenosyl-L-methionine.

The protein belongs to the methyltransferase superfamily. UbiG/COQ3 family.

It catalyses the reaction a 3-demethylubiquinol + S-adenosyl-L-methionine = a ubiquinol + S-adenosyl-L-homocysteine + H(+). The catalysed reaction is a 3-(all-trans-polyprenyl)benzene-1,2-diol + S-adenosyl-L-methionine = a 2-methoxy-6-(all-trans-polyprenyl)phenol + S-adenosyl-L-homocysteine + H(+). The protein operates within cofactor biosynthesis; ubiquinone biosynthesis. Functionally, O-methyltransferase that catalyzes the 2 O-methylation steps in the ubiquinone biosynthetic pathway. This is Ubiquinone biosynthesis O-methyltransferase from Chromobacterium violaceum (strain ATCC 12472 / DSM 30191 / JCM 1249 / CCUG 213 / NBRC 12614 / NCIMB 9131 / NCTC 9757 / MK).